The sequence spans 633 residues: Glutamyl-tRNA(Gln) amidotransferase subunit E (633 aa).

This sequence belongs to the GatB/GatE family. GatE subfamily. As to quaternary structure, heterodimer of GatD and GatE.

The enzyme catalyses L-glutamyl-tRNA(Gln) + L-glutamine + ATP + H2O = L-glutaminyl-tRNA(Gln) + L-glutamate + ADP + phosphate + H(+). In terms of biological role, allows the formation of correctly charged Gln-tRNA(Gln) through the transamidation of misacylated Glu-tRNA(Gln) in organisms which lack glutaminyl-tRNA synthetase. The reaction takes place in the presence of glutamine and ATP through an activated gamma-phospho-Glu-tRNA(Gln). The GatDE system is specific for glutamate and does not act on aspartate. In Methanococcus vannielii (strain ATCC 35089 / DSM 1224 / JCM 13029 / OCM 148 / SB), this protein is Glutamyl-tRNA(Gln) amidotransferase subunit E.